The following is a 376-amino-acid chain: Chaperone protein DnaJ (376 aa).

The J domain maps to 5–70 (DYYEILGVSK…QKRAAYDQYG (66 aa)). The CR-type zinc-finger motif lies at 131-209 (GVTKEIRIPT…CHGHGRVERS (79 aa)). The Zn(2+) site is built by Cys144, Cys147, Cys161, Cys164, Cys183, Cys186, Cys197, and Cys200. CXXCXGXG motif repeat units lie at residues 144–151 (CDVCHGSG), 161–168 (CPTCHGSG), 183–190 (CPHCQGRG), and 197–204 (CNKCHGHG).

The protein belongs to the DnaJ family. In terms of assembly, homodimer. Requires Zn(2+) as cofactor.

Its subcellular location is the cytoplasm. Its function is as follows. Participates actively in the response to hyperosmotic and heat shock by preventing the aggregation of stress-denatured proteins and by disaggregating proteins, also in an autonomous, DnaK-independent fashion. Unfolded proteins bind initially to DnaJ; upon interaction with the DnaJ-bound protein, DnaK hydrolyzes its bound ATP, resulting in the formation of a stable complex. GrpE releases ADP from DnaK; ATP binding to DnaK triggers the release of the substrate protein, thus completing the reaction cycle. Several rounds of ATP-dependent interactions between DnaJ, DnaK and GrpE are required for fully efficient folding. Also involved, together with DnaK and GrpE, in the DNA replication of plasmids through activation of initiation proteins. This chain is Chaperone protein DnaJ, found in Shigella flexneri serotype 5b (strain 8401).